A 727-amino-acid chain; its full sequence is Prolyl endopeptidase-like (727 aa).

Residues serine 559, aspartate 645, and histidine 690 each act as charge relay system in the active site.

It belongs to the peptidase S9A family. In terms of assembly, homodimer. Interacts with the AP-1 complex.

It localises to the cytoplasm. The protein resides in the cytosol. Its subcellular location is the golgi apparatus. The protein localises to the trans-Golgi network. It is found in the cytoskeleton. It localises to the nucleus. In terms of biological role, serine peptidase whose precise substrate specificity remains unclear. Does not cleave peptides after a arginine or lysine residue. Regulates trans-Golgi network morphology and sorting by regulating the membrane binding of the AP-1 complex. May play a role in the regulation of synaptic vesicle exocytosis. This chain is Prolyl endopeptidase-like (PREPL), found in Macaca fascicularis (Crab-eating macaque).